We begin with the raw amino-acid sequence, 140 residues long: Myelodysplastic syndrome 2 translocation-associated protein (140 aa).

In terms of tissue distribution, highly expressed in peripheral blood leukocytes, spleen, thymus, kidney, pancreas and lung.

The chain is Myelodysplastic syndrome 2 translocation-associated protein (MDS2) from Homo sapiens (Human).